Consider the following 198-residue polypeptide: Probable GTP-binding protein EngB (198 aa).

The region spanning 36–198 is the EngB-type G domain; it reads SDPQFAFIGR…NLSKLQELLE (163 aa). Residues 44-51, 70-74, 88-91, 155-158, and 182-184 each bind GTP; these read GRSNVGKS, GRTQL, DLPG, NKID, and ISA. Mg(2+) is bound by residues serine 51 and threonine 72.

Belongs to the TRAFAC class TrmE-Era-EngA-EngB-Septin-like GTPase superfamily. EngB GTPase family. Mg(2+) serves as cofactor.

Necessary for normal cell division and for the maintenance of normal septation. This Mesomycoplasma hyopneumoniae (strain 7448) (Mycoplasma hyopneumoniae) protein is Probable GTP-binding protein EngB.